Consider the following 324-residue polypeptide: Beta-ketoacyl-[acyl-carrier-protein] synthase III (324 aa).

Active-site residues include C112 and H249. The segment at 250–254 (QANRR) is ACP-binding. Residue N279 is part of the active site.

This sequence belongs to the thiolase-like superfamily. FabH family. In terms of assembly, homodimer.

Its subcellular location is the cytoplasm. The catalysed reaction is malonyl-[ACP] + acetyl-CoA + H(+) = 3-oxobutanoyl-[ACP] + CO2 + CoA. It participates in lipid metabolism; fatty acid biosynthesis. In terms of biological role, catalyzes the condensation reaction of fatty acid synthesis by the addition to an acyl acceptor of two carbons from malonyl-ACP. Catalyzes the first condensation reaction which initiates fatty acid synthesis and may therefore play a role in governing the total rate of fatty acid production. Possesses both acetoacetyl-ACP synthase and acetyl transacylase activities. Its substrate specificity determines the biosynthesis of branched-chain and/or straight-chain of fatty acids. This Streptococcus pyogenes serotype M49 (strain NZ131) protein is Beta-ketoacyl-[acyl-carrier-protein] synthase III.